A 308-amino-acid polypeptide reads, in one-letter code: HPr kinase/phosphorylase (308 aa).

Residues histidine 136 and lysine 157 contribute to the active site. Position 151–158 (151–158 (GESGIGKS)) interacts with ATP. Position 158 (serine 158) interacts with Mg(2+). The Proton acceptor; for phosphorylation activity. Proton donor; for dephosphorylation activity role is filled by aspartate 175. The important for the catalytic mechanism of both phosphorylation and dephosphorylation stretch occupies residues 198–207 (IEVRGMGIID). Residue glutamate 199 participates in Mg(2+) binding. Arginine 240 is a catalytic residue. The interval 261-266 (PIRPGR) is important for the catalytic mechanism of dephosphorylation.

It belongs to the HPrK/P family. Homohexamer. Mg(2+) is required as a cofactor.

It carries out the reaction [HPr protein]-L-serine + ATP = [HPr protein]-O-phospho-L-serine + ADP + H(+). It catalyses the reaction [HPr protein]-O-phospho-L-serine + phosphate + H(+) = [HPr protein]-L-serine + diphosphate. Its function is as follows. Catalyzes the ATP- as well as the pyrophosphate-dependent phosphorylation of a specific serine residue in HPr, a phosphocarrier protein of the phosphoenolpyruvate-dependent sugar phosphotransferase system (PTS). HprK/P also catalyzes the pyrophosphate-producing, inorganic phosphate-dependent dephosphorylation (phosphorolysis) of seryl-phosphorylated HPr (P-Ser-HPr). The two antagonistic activities of HprK/P are regulated by several intracellular metabolites, which change their concentration in response to the absence or presence of rapidly metabolisable carbon sources (glucose, fructose, etc.) in the growth medium. Therefore, by controlling the phosphorylation state of HPr, HPrK/P is a sensor enzyme that plays a major role in the regulation of carbon metabolism and sugar transport: it mediates carbon catabolite repression (CCR), and regulates PTS-catalyzed carbohydrate uptake and inducer exclusion. This Clostridium kluyveri (strain NBRC 12016) protein is HPr kinase/phosphorylase.